We begin with the raw amino-acid sequence, 118 residues long: Group 1 truncated hemoglobin GlbN (118 aa).

His70 is a heme binding site.

Belongs to the truncated hemoglobin family. Group I subfamily. In terms of assembly, monomer. The cofactor is heme.

It is found in the membrane. The sequence is that of Group 1 truncated hemoglobin GlbN (glbN) from Nostoc commune.